The sequence spans 89 residues: Tuberculin-active protein (89 aa).

A disulfide bond links cysteine 27 and cysteine 59. The tract at residues 61–89 is disordered; it reads DGGSESEGKNGSQMRLIADVGPESATVAK.

Functionally, tuberculin is the soluble, proteinaceous cell substance of the bacterium, to which infected animals become hypersensitive and react characteristically to dermal injections. The chain is Tuberculin-active protein from Mycobacterium tuberculosis.